Here is a 159-residue protein sequence, read N- to C-terminus: 3-dehydroquinate dehydratase (159 aa).

Residue Tyr-31 is the Proton acceptor of the active site. Asn-82, His-88, and Asp-95 together coordinate substrate. The active-site Proton donor is His-109. Substrate contacts are provided by residues 110 to 111 (IS) and Arg-120.

Belongs to the type-II 3-dehydroquinase family. As to quaternary structure, homododecamer.

The catalysed reaction is 3-dehydroquinate = 3-dehydroshikimate + H2O. It functions in the pathway metabolic intermediate biosynthesis; chorismate biosynthesis; chorismate from D-erythrose 4-phosphate and phosphoenolpyruvate: step 3/7. Catalyzes a trans-dehydration via an enolate intermediate. The sequence is that of 3-dehydroquinate dehydratase from Streptomyces avermitilis (strain ATCC 31267 / DSM 46492 / JCM 5070 / NBRC 14893 / NCIMB 12804 / NRRL 8165 / MA-4680).